The sequence spans 116 residues: Small ribosomal subunit protein uS17 (116 aa).

This sequence belongs to the universal ribosomal protein uS17 family. Part of the 30S ribosomal subunit.

Its function is as follows. One of the primary rRNA binding proteins, it binds specifically to the 5'-end of 16S ribosomal RNA. In Pyrococcus horikoshii (strain ATCC 700860 / DSM 12428 / JCM 9974 / NBRC 100139 / OT-3), this protein is Small ribosomal subunit protein uS17.